We begin with the raw amino-acid sequence, 728 residues long: Polyribonucleotide nucleotidyltransferase (728 aa).

Positions 503 and 509 each coordinate Mg(2+). Residues 570–629 form the KH domain; it reads PRLTTIKIPSDCIGMVIGKGGETIRGITEETGAEINIADDGTVTIACTTKEGTDAALATI. The S1 motif domain occupies 639 to 713; the sequence is GNIYVGKVRD…GKTKFALSIK (75 aa).

This sequence belongs to the polyribonucleotide nucleotidyltransferase family. Requires Mg(2+) as cofactor.

It is found in the cytoplasm. The catalysed reaction is RNA(n+1) + phosphate = RNA(n) + a ribonucleoside 5'-diphosphate. Functionally, involved in mRNA degradation. Catalyzes the phosphorolysis of single-stranded polyribonucleotides processively in the 3'- to 5'-direction. The sequence is that of Polyribonucleotide nucleotidyltransferase from Chlorobium chlorochromatii (strain CaD3).